Consider the following 166-residue polypeptide: Large ribosomal subunit protein uL10 (166 aa).

This sequence belongs to the universal ribosomal protein uL10 family. As to quaternary structure, part of the ribosomal stalk of the 50S ribosomal subunit. The N-terminus interacts with L11 and the large rRNA to form the base of the stalk. The C-terminus forms an elongated spine to which L12 dimers bind in a sequential fashion forming a multimeric L10(L12)X complex.

Forms part of the ribosomal stalk, playing a central role in the interaction of the ribosome with GTP-bound translation factors. This Listeria monocytogenes serotype 4b (strain CLIP80459) protein is Large ribosomal subunit protein uL10.